The chain runs to 296 residues: NADH-cytochrome b5 reductase 2-A (296 aa).

A helical membrane pass occupies residues 15-35 (FVIGAPTIALCSYYYSSGAFL). Residues 47 to 151 (NNWIDLPISR…KGPIPKWKWV (105 aa)) form the FAD-binding FR-type domain. 154–189 (SFESITLIGGGTGITPLYQLIHAITKNPNDKTKIRL) provides a ligand contact to FAD.

The protein belongs to the flavoprotein pyridine nucleotide cytochrome reductase family. It depends on FAD as a cofactor.

The protein resides in the mitochondrion outer membrane. It carries out the reaction 2 Fe(III)-[cytochrome b5] + NADH = 2 Fe(II)-[cytochrome b5] + NAD(+) + H(+). Its function is as follows. May mediate the reduction of outer membrane cytochrome b5. The chain is NADH-cytochrome b5 reductase 2-A (MCR1A) from Vanderwaltozyma polyspora (strain ATCC 22028 / DSM 70294 / BCRC 21397 / CBS 2163 / NBRC 10782 / NRRL Y-8283 / UCD 57-17) (Kluyveromyces polysporus).